The sequence spans 805 residues: Phenylalanine--tRNA ligase beta subunit (805 aa).

The tRNA-binding domain maps to 39-155 (VKVLGAFRIC…EDAPMGMRFI (117 aa)). Residues 408-479 (DTSRAYRFDP…RVASLTKLQG (72 aa)) form the B5 domain. 4 residues coordinate Mg(2+): D457, D463, E466, and E467. The region spanning 707 to 804 (SDLQAVERDF…VAKATGATLR (98 aa)) is the FDX-ACB domain.

Belongs to the phenylalanyl-tRNA synthetase beta subunit family. Type 1 subfamily. In terms of assembly, tetramer of two alpha and two beta subunits. The cofactor is Mg(2+).

The protein resides in the cytoplasm. The enzyme catalyses tRNA(Phe) + L-phenylalanine + ATP = L-phenylalanyl-tRNA(Phe) + AMP + diphosphate + H(+). The sequence is that of Phenylalanine--tRNA ligase beta subunit from Cereibacter sphaeroides (strain ATCC 17023 / DSM 158 / JCM 6121 / CCUG 31486 / LMG 2827 / NBRC 12203 / NCIMB 8253 / ATH 2.4.1.) (Rhodobacter sphaeroides).